A 75-amino-acid chain; its full sequence is Putative sulfur carrier protein YrkI (75 aa).

Cys14 serves as the catalytic Cysteine persulfide intermediate.

This sequence belongs to the sulfur carrier protein TusA family.

The polypeptide is Putative sulfur carrier protein YrkI (yrkI) (Bacillus subtilis (strain 168)).